The sequence spans 318 residues: L-carnitine dehydrogenase (318 aa).

14–19 is a binding site for NAD(+); it reads GAGVIG.

It belongs to the 3-hydroxyacyl-CoA dehydrogenase family. L-carnitine dehydrogenase subfamily. Homodimer.

Its subcellular location is the cytoplasm. It carries out the reaction carnitine + NAD(+) = 3-dehydrocarnitine + NADH + H(+). It participates in amine and polyamine metabolism; carnitine metabolism. Its function is as follows. Catalyzes the NAD(+)-dependent oxidation of L-carnitine to 3-dehydrocarnitine. This Streptomyces coelicolor (strain ATCC BAA-471 / A3(2) / M145) protein is L-carnitine dehydrogenase.